Reading from the N-terminus, the 282-residue chain is Bis(5'-nucleosyl)-tetraphosphatase, symmetrical (282 aa).

The protein belongs to the Ap4A hydrolase family.

The catalysed reaction is P(1),P(4)-bis(5'-adenosyl) tetraphosphate + H2O = 2 ADP + 2 H(+). In terms of biological role, hydrolyzes diadenosine 5',5'''-P1,P4-tetraphosphate to yield ADP. The polypeptide is Bis(5'-nucleosyl)-tetraphosphatase, symmetrical (Salmonella arizonae (strain ATCC BAA-731 / CDC346-86 / RSK2980)).